We begin with the raw amino-acid sequence, 318 residues long: Thymidylate synthase (318 aa).

Residues Arg-25 and 180-181 each bind dUMP; that span reads RR. Cys-200 (nucleophile) is an active-site residue. DUMP contacts are provided by residues 220-223, Asn-231, and 261-263; these read RSGD and HIY. Asp-223 provides a ligand contact to (6R)-5,10-methylene-5,6,7,8-tetrahydrofolate. Ala-317 contributes to the (6R)-5,10-methylene-5,6,7,8-tetrahydrofolate binding site.

This sequence belongs to the thymidylate synthase family. Bacterial-type ThyA subfamily. As to quaternary structure, homodimer.

The protein resides in the cytoplasm. It carries out the reaction dUMP + (6R)-5,10-methylene-5,6,7,8-tetrahydrofolate = 7,8-dihydrofolate + dTMP. Its pathway is pyrimidine metabolism; dTTP biosynthesis. In terms of biological role, catalyzes the reductive methylation of 2'-deoxyuridine-5'-monophosphate (dUMP) to 2'-deoxythymidine-5'-monophosphate (dTMP) while utilizing 5,10-methylenetetrahydrofolate (mTHF) as the methyl donor and reductant in the reaction, yielding dihydrofolate (DHF) as a by-product. This enzymatic reaction provides an intracellular de novo source of dTMP, an essential precursor for DNA biosynthesis. The protein is Thymidylate synthase of Bacillus cereus (strain ZK / E33L).